The primary structure comprises 225 residues: Suppressor of cytokine signaling 3 (225 aa).

Residues 22–33 (LKTFSSKSEYQL) form a kinase inhibitory region (KIR) region. Positions 34–45 (VVNAVRKLQESG) are extended SH2 subdomain (ESS). An SH2 domain is found at 46–142 (FYWSAVTGGE…APSFPSPPTE (97 aa)). A compositionally biased stretch (pro residues) spans 131-142 (PGAPSFPSPPTE). A disordered region spans residues 131–162 (PGAPSFPSPPTEPSSEVPEQPSAQPLPGSPPR). The span at 143-155 (PSSEVPEQPSAQP) shows a compositional bias: low complexity. Residues 177–224 (VLSRPLSSNVATLQHLCRKTVNGHLDSYEKVTQLPGPIREFLDQYDAP) enclose the SOCS box domain.

Interacts with multiple activated proteins of the tyrosine kinase signaling pathway including IGF1 receptor, insulin receptor and JAK2. Binding to JAK2 is mediated through the KIR and SH2 domains to a phosphorylated tyrosine residue within the JAK2 JH1 domain. Binds specific activated tyrosine residues of the leptin, EPO, IL12, GSCF and gp130 receptors. Interaction with CSNK1E stabilizes SOCS3 protein. Component of the probable ECS(SOCS3) E3 ubiquitin-protein ligase complex which contains CUL5, RNF7/RBX2, Elongin BC complex and SOCS3. Interacts with CUL5, RNF7, ELOB and ELOC. Interacts with CUL2. Interacts with FGFR3. Interacts with INSR. Interacts with BCL10; this interaction may interfere with BCL10-binding with PELI2. Interacts with NOD2 (via CARD domain); the interaction promotes NOD2 degradation. Post-translationally, phosphorylated on tyrosine residues after stimulation by the cytokines, IL-2, EPO or IGF1. As to expression, widely expressed with high expression in heart, placenta, skeletal muscle, peripheral blood leukocytes, fetal and adult lung, and fetal liver and kidney. Lower levels in thymus.

The protein operates within protein modification; protein ubiquitination. SOCS family proteins form part of a classical negative feedback system that regulates cytokine signal transduction. SOCS3 is involved in negative regulation of cytokines that signal through the JAK/STAT pathway. Inhibits cytokine signal transduction by binding to tyrosine kinase receptors including IL6ST/gp130, LIF, erythropoietin, insulin, IL12, GCSF and leptin receptors. Binding to JAK2 inhibits its kinase activity and regulates IL6 signaling. Suppresses fetal liver erythropoiesis. Regulates onset and maintenance of allergic responses mediated by T-helper type 2 cells. Probable substrate recognition component of a SCF-like ECS (Elongin BC-CUL2/5-SOCS-box protein) E3 ubiquitin-protein ligase complex which mediates the ubiquitination and subsequent proteasomal degradation of target proteins. This chain is Suppressor of cytokine signaling 3, found in Homo sapiens (Human).